A 349-amino-acid chain; its full sequence is Fructose-1,6-bisphosphatase class 1 (349 aa).

Mg(2+) is bound by residues Glu-113, Asp-135, Ile-137, and Asp-138. Substrate-binding positions include 138-141, Asn-230, Tyr-258, and Lys-288; that span reads DGSS. Position 294 (Glu-294) interacts with Mg(2+).

It belongs to the FBPase class 1 family. As to quaternary structure, homotetramer. Mg(2+) is required as a cofactor.

It localises to the cytoplasm. It carries out the reaction beta-D-fructose 1,6-bisphosphate + H2O = beta-D-fructose 6-phosphate + phosphate. Its pathway is carbohydrate biosynthesis; Calvin cycle. This chain is Fructose-1,6-bisphosphatase class 1, found in Nostoc punctiforme (strain ATCC 29133 / PCC 73102).